We begin with the raw amino-acid sequence, 117 residues long: SYEFSDCNENEYQTYVTDHSPQCILNDPLRPDTVSTPVSGNELLEAGEDCDCGAPANPCCDAATCKLRPGAQCAEGLCCDQCRFMKEGTICRMARGDDMDDYCNGISAGCPRNPFHA.

In terms of domain architecture, Disintegrin spans 36–117; sequence TPVSGNELLE…AGCPRNPFHA (82 aa). Cystine bridges form between Cys50–Cys65, Cys52–Cys60, Cys59–Cys82, Cys73–Cys79, Cys78–Cys103, and Cys91–Cys110. A Cell attachment site motif is present at residues 95 to 97; it reads RGD.

The protein belongs to the venom metalloproteinase (M12B) family. P-II subfamily. P-IIa sub-subfamily. In terms of assembly, monomer. It depends on Zn(2+) as a cofactor. As to expression, expressed by the venom gland.

Its subcellular location is the secreted. Functionally, impairs hemostasis in the envenomed animal. Its function is as follows. Inhibits platelet aggregation and bone resorption. In Gloydius halys (Chinese water mocassin), this protein is Zinc metalloproteinase/disintegrin.